The chain runs to 267 residues: Octanoyltransferase (267 aa).

The interval 1 to 30 (MPTGKLRQKPPYAAIMTNSPVTPSTETQQP) is disordered. Residues 16–28 (MTNSPVTPSTETQ) show a composition bias toward polar residues. Residues 77–265 (GTASELVWLV…AFESVFGPRQ (189 aa)) form the BPL/LPL catalytic domain. Residues 116–123 (RGGEYTYH), 196–198 (AIG), and 209–211 (GIA) contribute to the substrate site. C227 (acyl-thioester intermediate) is an active-site residue.

It belongs to the LipB family.

The protein localises to the cytoplasm. It carries out the reaction octanoyl-[ACP] + L-lysyl-[protein] = N(6)-octanoyl-L-lysyl-[protein] + holo-[ACP] + H(+). It functions in the pathway protein modification; protein lipoylation via endogenous pathway; protein N(6)-(lipoyl)lysine from octanoyl-[acyl-carrier-protein]: step 1/2. Functionally, catalyzes the transfer of endogenously produced octanoic acid from octanoyl-acyl-carrier-protein onto the lipoyl domains of lipoate-dependent enzymes. Lipoyl-ACP can also act as a substrate although octanoyl-ACP is likely to be the physiological substrate. The chain is Octanoyltransferase from Brucella abortus biovar 1 (strain 9-941).